The chain runs to 414 residues: Gamma-glutamyl phosphate reductase (414 aa).

This sequence belongs to the gamma-glutamyl phosphate reductase family.

The protein localises to the cytoplasm. It catalyses the reaction L-glutamate 5-semialdehyde + phosphate + NADP(+) = L-glutamyl 5-phosphate + NADPH + H(+). Its pathway is amino-acid biosynthesis; L-proline biosynthesis; L-glutamate 5-semialdehyde from L-glutamate: step 2/2. Its function is as follows. Catalyzes the NADPH-dependent reduction of L-glutamate 5-phosphate into L-glutamate 5-semialdehyde and phosphate. The product spontaneously undergoes cyclization to form 1-pyrroline-5-carboxylate. This chain is Gamma-glutamyl phosphate reductase, found in Xanthomonas oryzae pv. oryzae (strain MAFF 311018).